Here is a 212-residue protein sequence, read N- to C-terminus: External core antigen (212 aa).

A signal peptide spans 1–19 (MQLFHLCLVISCSCPTVQA). The HBEAG stretch occupies residues 25 to 27 (GWL). The tract at residues 165–212 (NAPILSTLPETTVVRRRGRSPRRRTPSPRRRRSQSPRRRRSQSRESQC) is disordered. Basic residues predominate over residues 178–205 (VRRRGRSPRRRTPSPRRRRSQSPRRRRS). The 1; half-length repeat unit spans residues 184 to 190 (SPRRRTP). Residues 184-206 (SPRRRTPSPRRRRSQSPRRRRSQ) form a 3 X 8 AA repeats of S-P-R-R-R-R-S-Q region. Positions 184–212 (SPRRRTPSPRRRRSQSPRRRRSQSRESQC) are excised as a propeptide. A run of 2 repeats spans residues 191 to 198 (SPRRRRSQ) and 199 to 206 (SPRRRRSQ).

It belongs to the orthohepadnavirus precore antigen family. Homodimerizes. Post-translationally, phosphorylated. Cleaved by host furin.

The protein resides in the secreted. It is found in the host nucleus. In terms of biological role, may regulate immune response to the intracellular capsid in acting as a T-cell tolerogen, by having an immunoregulatory effect which prevents destruction of infected cells by cytotoxic T-cells. This immune regulation may predispose to chronicity during perinatal infections and prevent severe liver injury during adult infections. The chain is External core antigen from Hepatitis B virus genotype B1 subtype adw (isolate Japan/pJDW233/1988) (HBV-B).